Reading from the N-terminus, the 253-residue chain is Nurim homolog (253 aa).

At 1 to 2 (MT) the chain is on the nuclear side. A helical membrane pass occupies residues 3 to 30 (SIAKSIVLLASLATFAYSLYVVGSLMMF). The Perinuclear space portion of the chain corresponds to 31 to 56 (LSTPRSISKAHTWIFNLLDNKSRLQT). The helical transmembrane segment at 57–78 (AYGPVVFDTLYLIGFIFQHSFL) threads the bilayer. Over 79–96 (KSAVVKKLLAKLGLSGAE) the chain is Nuclear. The helical transmembrane segment at 97–113 (RTIYSLTSSLCLHYLIV) threads the bilayer. The Perinuclear space segment spans residues 114–132 (NWLPAQSIVLWQIDVEQSA). The helical transmembrane segment at 133 to 161 (PLWWTFVITHGICWVVIFGGSLVMDLPEL) threads the bilayer. Topologically, residues 162 to 188 (LGVKQAYYDLKAYGPPISYKSGELRNL) are nuclear. The helical transmembrane segment at 189 to 207 (YAHVRHPSFVGLSVILFAT) threads the bilayer. At 208-213 (NVMSVD) the chain is on the perinuclear space side. A helical membrane pass occupies residues 214–231 (RLVMALLLTTYMYLAWST). Over 232 to 253 (DQKDVAYQKIQLQRKKLELKAK) the chain is Nuclear.

This sequence belongs to the nurim family.

The protein localises to the nucleus inner membrane. This chain is Nurim homolog (nrm), found in Drosophila melanogaster (Fruit fly).